Consider the following 294-residue polypeptide: Lycopene elongase/hydratase (294 aa).

8 helical membrane-spanning segments follow: residues 31-51 (FWLYLGGPVIVGVSYAADGPG), 53-73 (LFSPLAIALFLYFTIPGNVFL), 115-135 (LALLFALVLPTLGIVALLAWM), 160-180 (GLYILPGVIGYAAIEGVAPPA), 182-202 (AVVGAWLWAMGMHTFSAIPDI), 222-242 (TYYYCVMCWLMAAFVFNFTHW), 243-263 (VFGVLLLVYPGLVFGILGVGV), and 274-294 (AINTVVGMVFTLIALWVMLYG).

It belongs to the UbiA prenyltransferase family.

It is found in the cell membrane. The enzyme catalyses all-trans-lycopene + dimethylallyl diphosphate + H2O = dihydroisopentenyldehydrorhodopin + diphosphate. The catalysed reaction is isopentenyldehydrorhodopin + dimethylallyl diphosphate + H2O = dihydrobisanhydrobacterioruberin + diphosphate. The protein operates within carotenoid biosynthesis. Functionally, involved in the biosynthesis of the acyclic C50 carotenoid bacterioruberin (BR). Acts as a bifunctional elongase/hydratase that catalyzes the elongation of lycopene by attaching a C(5) isoprene unit at C-2, as well as the hydroxylation of the previous end of the molecule. The enzyme acts at both ends of the substrate, and catalyzes the conversion of lycopene to the C(45) intermediate dihydroisopentenyldehydrorhodopin (DH-IDR) and the conversion of isopentenyldehydrorhodopin (IDR) to the C(50) carotenoid dihydrobisanhydrobacterioruberin (DH-BABR). Can also catalyze the conversion of lycopene to tetrahydrobisanhydrobacterioruberin (TH-BABR). The polypeptide is Lycopene elongase/hydratase (Haloarcula japonica (strain ATCC 49778 / DSM 6131 / JCM 7785 / NBRC 101032 / NCIMB 13157 / TR-1)).